The primary structure comprises 125 residues: Fluoride-specific ion channel FluC (125 aa).

4 helical membrane passes run 9 to 29 (LFCAGGGLTRYYLSGWIYGLL), 32 to 52 (AFPYGTLVVNIIGAYCIGLIM), 67 to 87 (IGLTVGFMGGLTTFSTFSYET), and 99 to 119 (AFTNVLASVAVCLLCTWLGII). Positions 75 and 78 each coordinate Na(+).

This sequence belongs to the fluoride channel Fluc/FEX (TC 1.A.43) family.

It is found in the cell inner membrane. The catalysed reaction is fluoride(in) = fluoride(out). With respect to regulation, na(+) is not transported, but it plays an essential structural role and its presence is essential for fluoride channel function. Fluoride-specific ion channel. Important for reducing fluoride concentration in the cell, thus reducing its toxicity. This chain is Fluoride-specific ion channel FluC, found in Trichlorobacter lovleyi (strain ATCC BAA-1151 / DSM 17278 / SZ) (Geobacter lovleyi).